Consider the following 715-residue polypeptide: Fatty acid oxidation complex subunit alpha (715 aa).

An enoyl-CoA hydratase region spans residues 1 to 190 (MTTTSAFMLN…KAGLVDDVVP (190 aa)). The segment at 306–715 (GPLNSVGILG…WTNGETDQGN (410 aa)) is 3-hydroxyacyl-CoA dehydrogenase.

The protein in the N-terminal section; belongs to the enoyl-CoA hydratase/isomerase family. In the central section; belongs to the 3-hydroxyacyl-CoA dehydrogenase family. In terms of assembly, heterotetramer of two alpha chains (FadJ) and two beta chains (FadI).

It localises to the cytoplasm. The catalysed reaction is a (3S)-3-hydroxyacyl-CoA = a (2E)-enoyl-CoA + H2O. It catalyses the reaction a 4-saturated-(3S)-3-hydroxyacyl-CoA = a (3E)-enoyl-CoA + H2O. The enzyme catalyses a (3S)-3-hydroxyacyl-CoA + NAD(+) = a 3-oxoacyl-CoA + NADH + H(+). It carries out the reaction (3S)-3-hydroxybutanoyl-CoA = (3R)-3-hydroxybutanoyl-CoA. It participates in lipid metabolism; fatty acid beta-oxidation. Catalyzes the formation of a hydroxyacyl-CoA by addition of water on enoyl-CoA. Also exhibits 3-hydroxyacyl-CoA epimerase and 3-hydroxyacyl-CoA dehydrogenase activities. This chain is Fatty acid oxidation complex subunit alpha, found in Salmonella agona (strain SL483).